Consider the following 288-residue polypeptide: Ribosomal RNA small subunit methyltransferase I (288 aa).

It belongs to the methyltransferase superfamily. RsmI family.

It localises to the cytoplasm. The enzyme catalyses cytidine(1402) in 16S rRNA + S-adenosyl-L-methionine = 2'-O-methylcytidine(1402) in 16S rRNA + S-adenosyl-L-homocysteine + H(+). In terms of biological role, catalyzes the 2'-O-methylation of the ribose of cytidine 1402 (C1402) in 16S rRNA. The protein is Ribosomal RNA small subunit methyltransferase I of Vibrio cholerae serotype O1 (strain ATCC 39315 / El Tor Inaba N16961).